A 78-amino-acid chain; its full sequence is Small ribosomal subunit protein uS17 (78 aa).

Belongs to the universal ribosomal protein uS17 family. As to quaternary structure, part of the 30S ribosomal subunit.

Its function is as follows. One of the primary rRNA binding proteins, it binds specifically to the 5'-end of 16S ribosomal RNA. This is Small ribosomal subunit protein uS17 from Sinorhizobium medicae (strain WSM419) (Ensifer medicae).